Consider the following 305-residue polypeptide: Outer membrane protein assembly factor BamD (305 aa).

The N-terminal stretch at 1–24 is a signal peptide; the sequence is MLRIFQGRPAVTIAAVLVAASVAG. Residue cysteine 25 is the site of N-palmitoyl cysteine attachment. Cysteine 25 carries the S-diacylglycerol cysteine lipid modification. TPR repeat units follow at residues 41–74, 78–111, 113–136, and 174–207; these read VELL…HPYS, RRSI…YPGN, SAQY…NRDQ, and AGKE…HQTT.

Belongs to the BamD family. In terms of assembly, part of the Bam complex.

It localises to the cell outer membrane. Functionally, part of the outer membrane protein assembly complex, which is involved in assembly and insertion of beta-barrel proteins into the outer membrane. This chain is Outer membrane protein assembly factor BamD, found in Caulobacter vibrioides (strain ATCC 19089 / CIP 103742 / CB 15) (Caulobacter crescentus).